Consider the following 386-residue polypeptide: WD repeat-containing protein 89 (386 aa).

6 WD repeats span residues 21–65 (KEPT…LLRE), 68–107 (GSPG…EKPA), 112–156 (GYPS…QDLS), 167–207 (THSD…EEDA), 213–253 (NSVS…TDEP), and 318–357 (GHAA…KTFT).

The chain is WD repeat-containing protein 89 (Wdr89) from Rattus norvegicus (Rat).